Here is a 158-residue protein sequence, read N- to C-terminus: Transcription elongation factor GreA (158 aa).

Residues 49–69 are a coiled coil; the sequence is SEYESAKDEQAFVEGRISQIE. The disordered stretch occupies residues 102 to 125; that stretch reads EEPESYTIVGESESDPLSGKISNE.

This sequence belongs to the GreA/GreB family.

Functionally, necessary for efficient RNA polymerase transcription elongation past template-encoded arresting sites. The arresting sites in DNA have the property of trapping a certain fraction of elongating RNA polymerases that pass through, resulting in locked ternary complexes. Cleavage of the nascent transcript by cleavage factors such as GreA or GreB allows the resumption of elongation from the new 3'terminus. GreA releases sequences of 2 to 3 nucleotides. This chain is Transcription elongation factor GreA, found in Limosilactobacillus fermentum (strain NBRC 3956 / LMG 18251) (Lactobacillus fermentum).